The chain runs to 1202 residues: Probable DNA polymerase (1202 aa).

Belongs to the DNA polymerase type-B family.

Its subcellular location is the mitochondrion. It catalyses the reaction DNA(n) + a 2'-deoxyribonucleoside 5'-triphosphate = DNA(n+1) + diphosphate. The polypeptide is Probable DNA polymerase (Ascobolus immersus).